Consider the following 582-residue polypeptide: Semenogelin-2 (582 aa).

The first 23 residues, 1–23 (MKSIILFVLSLLLILEKQAAVMG), serve as a signal peptide directing secretion. Disordered stretches follow at residues 26-65 (CGSK…SFSI), 132-159 (GGQA…SSQY), 272-295 (NLNQ…RTEE), 318-358 (TEEK…ERHL), 379-417 (EEQI…EERR), and 439-582 (EEQI…PVST). Composition is skewed to polar residues over residues 31–40 (QLPSGSSQFP) and 137–159 (RGTQ…SSQY). Residues 325–335 (KSQNQVTIHSQ) show a composition bias toward polar residues. Positions 336–345 (GQEHGHKENK) are enriched in basic and acidic residues. Composition is skewed to polar residues over residues 379–397 (EEQI…SQAQ), 439–457 (EEQI…SQAQ), 487–496 (KDVSQSSTSF), and 506–524 (SQIQ…QNAK). 2 stretches are compositionally biased toward basic and acidic residues: residues 525 to 552 (GKSD…ESSE) and 559 to 582 (TEHE…PVST).

The protein belongs to the semenogelin family. In terms of assembly, interacts with SERPINA5.

The protein resides in the secreted. Participates in the formation of a gel matrix (sperm coagulum) entrapping the accessory gland secretions and ejaculated spermatozoa. The chain is Semenogelin-2 (SEMG2) from Hylobates lar (Lar gibbon).